Here is a 72-residue protein sequence, read N- to C-terminus: Translation initiation factor IF-1 (72 aa).

An S1-like domain is found at 1-72 (MSKQDVIELE…SRGRITWRKK (72 aa)).

It belongs to the IF-1 family. As to quaternary structure, component of the 30S ribosomal translation pre-initiation complex which assembles on the 30S ribosome in the order IF-2 and IF-3, IF-1 and N-formylmethionyl-tRNA(fMet); mRNA recruitment can occur at any time during PIC assembly.

The protein resides in the cytoplasm. One of the essential components for the initiation of protein synthesis. Stabilizes the binding of IF-2 and IF-3 on the 30S subunit to which N-formylmethionyl-tRNA(fMet) subsequently binds. Helps modulate mRNA selection, yielding the 30S pre-initiation complex (PIC). Upon addition of the 50S ribosomal subunit IF-1, IF-2 and IF-3 are released leaving the mature 70S translation initiation complex. In Alkaliphilus oremlandii (strain OhILAs) (Clostridium oremlandii (strain OhILAs)), this protein is Translation initiation factor IF-1.